The following is a 431-amino-acid chain: tRNA-specific 2-thiouridylase MnmA (431 aa).

Residues 35 to 42 (AMSGGVDS) and Leu-61 each bind ATP. The active-site Nucleophile is Cys-129. Residues Cys-129 and Cys-226 are joined by a disulfide bond. Gly-153 lines the ATP pocket. Positions 176 to 178 (RDQ) are interaction with tRNA. The Cysteine persulfide intermediate role is filled by Cys-226. Positions 407 to 431 (PKPPNEDLLDTNESSDLVSPKRSAC) are disordered.

It belongs to the MnmA/TRMU family.

The protein resides in the cytoplasm. The enzyme catalyses S-sulfanyl-L-cysteinyl-[protein] + uridine(34) in tRNA + AH2 + ATP = 2-thiouridine(34) in tRNA + L-cysteinyl-[protein] + A + AMP + diphosphate + H(+). Its function is as follows. Catalyzes the 2-thiolation of uridine at the wobble position (U34) of tRNA, leading to the formation of s(2)U34. In Beijerinckia indica subsp. indica (strain ATCC 9039 / DSM 1715 / NCIMB 8712), this protein is tRNA-specific 2-thiouridylase MnmA.